A 417-amino-acid polypeptide reads, in one-letter code: Tryptophan synthase beta chain (417 aa).

Lysine 110 bears the N6-(pyridoxal phosphate)lysine mark.

Belongs to the TrpB family. In terms of assembly, tetramer of two alpha and two beta chains. Pyridoxal 5'-phosphate is required as a cofactor.

The enzyme catalyses (1S,2R)-1-C-(indol-3-yl)glycerol 3-phosphate + L-serine = D-glyceraldehyde 3-phosphate + L-tryptophan + H2O. It functions in the pathway amino-acid biosynthesis; L-tryptophan biosynthesis; L-tryptophan from chorismate: step 5/5. In terms of biological role, the beta subunit is responsible for the synthesis of L-tryptophan from indole and L-serine. The polypeptide is Tryptophan synthase beta chain (Prochlorococcus marinus (strain NATL1A)).